The chain runs to 195 residues: Phosphoheptose isomerase (195 aa).

The 159-residue stretch at 37-195 (ISDSFKQHGK…IEFEMAKIRQ (159 aa)) folds into the SIS domain. Residue 52 to 54 (NGG) coordinates substrate. The Zn(2+) site is built by histidine 61 and glutamate 65. Substrate contacts are provided by residues glutamate 65, 93 to 94 (ND), 119 to 121 (STS), serine 124, and glutamine 172. Glutamine 172 and histidine 180 together coordinate Zn(2+).

Belongs to the SIS family. GmhA subfamily. As to quaternary structure, homotetramer. Zn(2+) serves as cofactor.

The protein localises to the cytoplasm. The catalysed reaction is 2 D-sedoheptulose 7-phosphate = D-glycero-alpha-D-manno-heptose 7-phosphate + D-glycero-beta-D-manno-heptose 7-phosphate. The protein operates within carbohydrate biosynthesis; D-glycero-D-manno-heptose 7-phosphate biosynthesis; D-glycero-alpha-D-manno-heptose 7-phosphate and D-glycero-beta-D-manno-heptose 7-phosphate from sedoheptulose 7-phosphate: step 1/1. Its function is as follows. Catalyzes the isomerization of sedoheptulose 7-phosphate in D-glycero-D-manno-heptose 7-phosphate. The sequence is that of Phosphoheptose isomerase from Histophilus somni (strain 2336) (Haemophilus somnus).